Reading from the N-terminus, the 484-residue chain is Carbohydrate sulfotransferase 7 (484 aa).

Topologically, residues 1-12 (MKGRRRRRREYC) are cytoplasmic. Residues 13-33 (KFTLLLALYTLLLLLVPSVLD) form a helical; Signal-anchor for type II membrane protein membrane-spanning segment. At 34–484 (SHSEQDKGRN…PLETKANWAV (451 aa)) the chain is on the lumenal side. The tract at residues 71–90 (RSLAEGNPDRSPGSPGNLSA) is disordered. N-linked (GlcNAc...) asparagine glycosylation occurs at N87. A 3'-phosphoadenylyl sulfate-binding site is contributed by 108-114 (WRTGSSF). Residue N184 is glycosylated (N-linked (GlcNAc...) asparagine). 276–284 (RDPRAVHNS) serves as a coordination point for 3'-phosphoadenylyl sulfate. N405 is a glycosylation site (N-linked (GlcNAc...) asparagine). Phosphoserine is present on S460. Residues 460-473 (SGDERDRKTVREGE) are compositionally biased toward basic and acidic residues. The segment at 460 to 484 (SGDERDRKTVREGETPLETKANWAV) is disordered.

The protein belongs to the sulfotransferase 1 family. Gal/GlcNAc/GalNAc subfamily. As to expression, widely expressed. Highly expressed in kidney. Expressed at lower level in heart, lung and liver.

The protein resides in the golgi apparatus membrane. It carries out the reaction chondroitin beta-D-glucuronate + n 3'-phosphoadenylyl sulfate = chondroitin 6'-sulfate + n adenosine 3',5'-bisphosphate + n H(+). Its function is as follows. Sulfotransferase that utilizes 3'-phospho-5'-adenylyl sulfate (PAPS) as sulfonate donor to catalyze the transfer of sulfate to position 6 of non-reducing N-acetylglucosamine (GlcNAc) residues. Preferentially acts on mannose-linked GlcNAc. Also able to catalyze the transfer of sulfate to position 6 of the N-acetylgalactosamine (GalNAc) residue of chondroitin. Also acts on core 2 mucin-type oligosaccharide and N-acetyllactosamine oligomer with a lower efficiency. Has weak or no activity toward keratan sulfate and oligosaccharides containing the Galbeta1-4GlcNAc. Catalyzes 6-O-sulfation of beta-benzyl GlcNAc but not alpha- or beta-benzyl GalNAc. In Mus musculus (Mouse), this protein is Carbohydrate sulfotransferase 7 (Chst7).